A 331-amino-acid polypeptide reads, in one-letter code: Ferredoxin--NADP reductase 2 (331 aa).

Positions 37, 45, 50, 90, 124, 286, and 327 each coordinate FAD.

The protein belongs to the ferredoxin--NADP reductase type 2 family. In terms of assembly, homodimer. FAD is required as a cofactor.

The enzyme catalyses 2 reduced [2Fe-2S]-[ferredoxin] + NADP(+) + H(+) = 2 oxidized [2Fe-2S]-[ferredoxin] + NADPH. This Listeria monocytogenes serotype 4b (strain F2365) protein is Ferredoxin--NADP reductase 2.